The primary structure comprises 245 residues: 8-amino-3,8-dideoxy-manno-octulosonate cytidylyltransferase (245 aa).

It belongs to the KdsB family.

It is found in the cytoplasm. It carries out the reaction 8-amino-3,8-dideoxy-alpha-D-manno-octulosonate + CTP = CMP-8-amino-3,8-dideoxy-alpha-D-manno-oct-2-ulosonate + diphosphate. Its pathway is bacterial outer membrane biogenesis; lipopolysaccharide biosynthesis. Its function is as follows. Activates KDO8N (a required 8-carbon sugar) for incorporation into bacterial lipopolysaccharide in the Shewanella genus. This is 8-amino-3,8-dideoxy-manno-octulosonate cytidylyltransferase from Shewanella sediminis (strain HAW-EB3).